The sequence spans 328 residues: D-cysteine desulfhydrase (328 aa).

Lysine 51 carries the N6-(pyridoxal phosphate)lysine modification.

This sequence belongs to the ACC deaminase/D-cysteine desulfhydrase family. In terms of assembly, homodimer. Pyridoxal 5'-phosphate serves as cofactor.

The enzyme catalyses D-cysteine + H2O = hydrogen sulfide + pyruvate + NH4(+) + H(+). Its function is as follows. Catalyzes the alpha,beta-elimination reaction of D-cysteine and of several D-cysteine derivatives. It could be a defense mechanism against D-cysteine. The polypeptide is D-cysteine desulfhydrase (Klebsiella pneumoniae (strain 342)).